A 637-amino-acid chain; its full sequence is MVTVTLPDGSVRPFEGPVTVAEVASSIGAGLAKAALAGKVDGKLVDTSYVIDADAQLAIVTAKDAEALDLIRHDAAHVMAQAVQELYPGTQVTIGPAIEDGFYYDFAREQPFTPEDLEKIEKRMDEIVKRDLPIRREVWSRDEAMKVFGDLGETYKVQIIDEVIPKGEELSIYRQGEWFDVCRGPHLPSTGKLPRAFKLMKLAGAYWRGDSKNAMLQRIYGTAWAKKEDLEAYLHRLEEAEKRDHRRLAKQLDLLHMQDEAPGMVFWHPKGWIVWQQIEQYMREKFVEYGYQEVRTPAVMDRSMWEKSGHWENYRDNMFTTASENRDYAVKPMNCPGHVQIFNSGLHSYRDLPLRLAEFGSCHRNEPSGALHGIMRVRGFTQDDAHIFCMEEQVEQEVADFIVMLQKVYADFGFNDVLVKLSTRPDKRVGSDESWDKAESALAAALEKNGLSFDLQPGEGAFYGPKIEFTLKDTLGRLWQCGTIQLDFNLPVRLGAEFVAEDNTRKIPVMLHRAILGSMERFIGILIEHHAGNFPLWLAPVQVMVMNISERQAAYAEAVAEALRRAGIRAALDLSNNKINYKIREHSLQKLPYQLVVGDKEMEARVVAVRARGNQDMGQLGLDDLIARLRAEVLARQ.

Residues 1-61 (MVTVTLPDGS…DADAQLAIVT (61 aa)) enclose the TGS domain. The interval 244–535 (DHRRLAKQLD…LIEHHAGNFP (292 aa)) is catalytic. Zn(2+)-binding residues include Cys-335, His-386, and His-512.

The protein belongs to the class-II aminoacyl-tRNA synthetase family. Homodimer. It depends on Zn(2+) as a cofactor.

Its subcellular location is the cytoplasm. It carries out the reaction tRNA(Thr) + L-threonine + ATP = L-threonyl-tRNA(Thr) + AMP + diphosphate + H(+). In terms of biological role, catalyzes the attachment of threonine to tRNA(Thr) in a two-step reaction: L-threonine is first activated by ATP to form Thr-AMP and then transferred to the acceptor end of tRNA(Thr). Also edits incorrectly charged L-seryl-tRNA(Thr). This is Threonine--tRNA ligase from Thiobacillus denitrificans (strain ATCC 25259 / T1).